A 565-amino-acid polypeptide reads, in one-letter code: Periplasmic trehalase (565 aa).

An N-terminal signal peptide occupies residues 1-30 (MKSPAPSRPQKMALIPACIFLCFAALSVQA). Substrate-binding positions include arginine 152, 159–160 (WD), asparagine 196, 205–207 (RSQ), 277–279 (RPE), and glycine 310. Active-site proton donor/acceptor residues include aspartate 312 and glutamate 496. Glutamate 511 lines the substrate pocket. Positions 539–565 (CDNVPATRPLSESTTQPLKQKEAEPTP) are disordered.

The protein belongs to the glycosyl hydrolase 37 family. Monomer.

The protein localises to the periplasm. The enzyme catalyses alpha,alpha-trehalose + H2O = alpha-D-glucose + beta-D-glucose. In terms of biological role, provides the cells with the ability to utilize trehalose at high osmolarity by splitting it into glucose molecules that can subsequently be taken up by the phosphotransferase-mediated uptake system. This chain is Periplasmic trehalase, found in Escherichia coli O45:K1 (strain S88 / ExPEC).